The chain runs to 302 residues: Spermidine synthase (302 aa).

N-acetylmethionine is present on M1. Residues 18-253 (EGWFRETCSL…GQIGFMLCSK (236 aa)) enclose the PABS domain. Q49 is an S-adenosyl 3-(methylsulfanyl)propylamine binding site. Y79 contacts putrescine. S-adenosyl 3-(methylsulfanyl)propylamine contacts are provided by residues Q80, D104, E124, 155–156 (DG), and D173. The active-site Proton acceptor is the D173. Residues 173 to 176 (DSSD) and Y241 each bind putrescine.

Belongs to the spermidine/spermine synthase family. In terms of assembly, homodimer or homotetramer.

The enzyme catalyses S-adenosyl 3-(methylsulfanyl)propylamine + putrescine = S-methyl-5'-thioadenosine + spermidine + H(+). The protein operates within amine and polyamine biosynthesis; spermidine biosynthesis; spermidine from putrescine: step 1/1. Its activity is regulated as follows. The activity is thought to be regulated mainly by the availability of decarboxylated S-adenosylmethionine. Catalyzes the production of spermidine from putrescine and decarboxylated S-adenosylmethionine (dcSAM). Has a strong preference for putrescine as substrate, and has very low activity towards 1,3-diaminopropane. Has extremely low activity towards spermidine. The protein is Spermidine synthase (SRM) of Homo sapiens (Human).